The chain runs to 299 residues: Recombination-associated protein RdgC (299 aa).

It belongs to the RdgC family.

The protein resides in the cytoplasm. It is found in the nucleoid. May be involved in recombination. The polypeptide is Recombination-associated protein RdgC (Cupriavidus necator (strain ATCC 17699 / DSM 428 / KCTC 22496 / NCIMB 10442 / H16 / Stanier 337) (Ralstonia eutropha)).